Reading from the N-terminus, the 341-residue chain is tRNA N6-adenosine threonylcarbamoyltransferase (341 aa).

Residues H111 and H115 each coordinate Fe cation. Substrate is bound by residues 134 to 138 (LVSGG), D167, G180, and N276. Fe cation is bound at residue D304.

The protein belongs to the KAE1 / TsaD family. Requires Fe(2+) as cofactor.

The protein localises to the cytoplasm. It catalyses the reaction L-threonylcarbamoyladenylate + adenosine(37) in tRNA = N(6)-L-threonylcarbamoyladenosine(37) in tRNA + AMP + H(+). Required for the formation of a threonylcarbamoyl group on adenosine at position 37 (t(6)A37) in tRNAs that read codons beginning with adenine. Is involved in the transfer of the threonylcarbamoyl moiety of threonylcarbamoyl-AMP (TC-AMP) to the N6 group of A37, together with TsaE and TsaB. TsaD likely plays a direct catalytic role in this reaction. The protein is tRNA N6-adenosine threonylcarbamoyltransferase of Pseudomonas putida (strain ATCC 700007 / DSM 6899 / JCM 31910 / BCRC 17059 / LMG 24140 / F1).